The chain runs to 137 residues: Hydrogenase-4 component J (137 aa).

It to E.coli HycH.

In terms of biological role, possible component of hydrogenase 4. The polypeptide is Hydrogenase-4 component J (Escherichia coli (strain K12)).